Consider the following 429-residue polypeptide: MTQYAASAGDAIVDPATHGLDVYAVGGAIRDTLLGLPVQDRDYVVVGATPEAMEARGFRTVGKDFPVFLHPRTQAEYALARTERKTAAGYKGFSVYYAPDVTLEDDLVRRDLTINAMAQRVAEDGALVGPVIDPYGGQADLASRTFRHVSEAFVEDPVRILRVARFAARFAEFHVAPETRALMQRMAEAGEVDALVPERVWQELARGLLEARPSRLFAVLRDCGALVRLLPELDRLWGVPQRADYHPEVDTGVHTMMVVDTAAAMDTPLPVRFAALVHDLGKGTTPADILPRHVGHEARGLPMIEDICRRLRVPTDCRDLAIMVAREHGNIHRSDGFDATALVRLLERCDALRKPERFRQALLACEADARGRLGFEQRDYPQPVRLLRALQAAASIDAGAVAKRYADNPAHIKQAVHVARIEAVAQAGL.

ATP is bound by residues Gly-27 and Arg-30. CTP-binding residues include Gly-27 and Arg-30. Residues Asp-40 and Asp-42 each coordinate Mg(2+). Positions 110, 162, and 165 each coordinate ATP. 3 residues coordinate CTP: Arg-110, Arg-162, and Arg-165. The HD domain occupies Thr-251–Leu-352.

Belongs to the tRNA nucleotidyltransferase/poly(A) polymerase family. Bacterial CCA-adding enzyme type 1 subfamily. As to quaternary structure, monomer. Can also form homodimers and oligomers. Requires Mg(2+) as cofactor. Ni(2+) is required as a cofactor.

It catalyses the reaction a tRNA precursor + 2 CTP + ATP = a tRNA with a 3' CCA end + 3 diphosphate. The enzyme catalyses a tRNA with a 3' CCA end + 2 CTP + ATP = a tRNA with a 3' CCACCA end + 3 diphosphate. Catalyzes the addition and repair of the essential 3'-terminal CCA sequence in tRNAs without using a nucleic acid template. Adds these three nucleotides in the order of C, C, and A to the tRNA nucleotide-73, using CTP and ATP as substrates and producing inorganic pyrophosphate. tRNA 3'-terminal CCA addition is required both for tRNA processing and repair. Also involved in tRNA surveillance by mediating tandem CCA addition to generate a CCACCA at the 3' terminus of unstable tRNAs. While stable tRNAs receive only 3'-terminal CCA, unstable tRNAs are marked with CCACCA and rapidly degraded. This is Multifunctional CCA protein from Ralstonia nicotianae (strain ATCC BAA-1114 / GMI1000) (Ralstonia solanacearum).